Reading from the N-terminus, the 915-residue chain is MQQQHLFRFNILCLSLMTALPAYAENVQAGQAQEKQLDTIQVKAKKQKTRRDNEVTGLGKLVKSSDTLSKEQVLNIRDLTRYDPGIAVVEQGRGASSGYSIRGMDKNRVSLTVDGVSQIQSYTAQAALGGTRTAGSSGAINEIEYENVKAVEISKGSNSVEQGSGALAGSVAFQTKTADDVIGEGRQWGIQSKTAYSGKNRGLTQSIALAGRIGGAEALLIHTGRRAGEIRAHEDAGRGVQSFNRLVPVEDSSNYAYFIVKEECKNGSYETCKANPKKDVVGKDERQTVSTRDYTGPNRFLADPLSYESRSWLFRPGFRFENKRHYIGGILEHTQQTFDTRDMTVPAFLTKAVFDANKKQAGSLPGNGKYAGNHKYGGLFTNGENGALVGAEYGTGVFYDETHTKSRYGLEYVYTNADKDTWADYARLSYDRQGIGLDNHFQQTHCSADGSDKYCRPSADKPFSYYKSDRVIYGESHRLLQAAFKKSFDTAKIRHNLSVNLGFDRFGSNLRHQDYYYQHANRAYSSNTPPQNNGKKISPNGSETSPYWVTIGRGNVVTGQICRLGNNTYTDCTPRSINGKSYYAAVRDNVRLGRWADVGAGLRYDYRSTHSDDGSVSTGTHRTLSWNAGIVLKPTDWLDLTYRTSTGFRLPSFAEMYGWRAGVQSKAVKIDPEKSFNKEAGIVFKGDFGNLEASWFNNAYRDLIVRGYEAQIKDGKEEAKGDPAYLNAQSARITGINILGKIDWNGVWDKLPEGWYSTFAYNRVRVRDIKKRADRTDIQSHLFDAIQPSRYVVGLGYDQPEGKWGVNGMLTYSKAKEITELLGSRALLNGNSRNTKATARRTRPWYIVDVSGYYTVKKHFTLRAGVYNLLNYRYVTWENVRQTAGGAVNQHKNVGVYNRYAAPGRNYTFSLEMKF.

A signal peptide spans 1 to 24 (MQQQHLFRFNILCLSLMTALPAYA). Residues 25–187 (ENVQAGQAQE…ADDVIGEGRQ (163 aa)) are Periplasmic-facing. The TonB box motif lies at 38-45 (DTIQVKAK). One can recognise a TBDR plug domain in the interval 51–176 (RDNEVTGLGK…LAGSVAFQTK (126 aa)). The interval 121–139 (SYTAQAALGGTRTAGSSGA) is plug loop, interacts with transferrin. The TBDR beta-barrel domain maps to 187–915 (QWGIQSKTAY…NYTFSLEMKF (729 aa)). The chain crosses the membrane as a beta stranded span at residues 188-197 (WGIQSKTAYS). Residues 198-203 (GKNRGL) are Extracellular-facing. A beta stranded transmembrane segment spans residues 204-213 (TQSIALAGRI). At 214 to 215 (GG) the chain is on the periplasmic side. A beta stranded membrane pass occupies residues 216-225 (AEALLIHTGR). Residues 226 to 309 (RAGEIRAHED…FLADPLSYES (84 aa)) are Extracellular-facing. A beta stranded membrane pass occupies residues 310–319 (RSWLFRPGFR). The Periplasmic segment spans residues 320–324 (FENKR). Residues 325–334 (HYIGGILEHT) traverse the membrane as a beta stranded segment. The Extracellular segment spans residues 335–406 (QQTFDTRDMT…VFYDETHTKS (72 aa)). An L3 helix finger, interacts with transferrin region spans residues 351–361 (KAVFDANKKQA). Residues 407 to 415 (RYGLEYVYT) traverse the membrane as a beta stranded segment. Residues 416–423 (NADKDTWA) lie on the Periplasmic side of the membrane. A beta stranded transmembrane segment spans residues 424 to 433 (DYARLSYDRQ). At 434–478 (GIGLDNHFQQTHCSADGSDKYCRPSADKPFSYYKSDRVIYGESHR) the chain is on the extracellular side. A beta stranded membrane pass occupies residues 479-488 (LLQAAFKKSF). The Periplasmic portion of the chain corresponds to 489 to 494 (DTAKIR). A beta stranded transmembrane segment spans residues 495–504 (HNLSVNLGFD). The Extracellular portion of the chain corresponds to 505-583 (RFGSNLRHQD…PRSINGKSYY (79 aa)). Positions 523–542 (AYSSNTPPQNNGKKISPNGS) are disordered. Residues 584–592 (AAVRDNVRL) traverse the membrane as a beta stranded segment. The Periplasmic portion of the chain corresponds to 593-594 (GR). A beta stranded membrane pass occupies residues 595–603 (WADVGAGLR). At 604–623 (YDYRSTHSDDGSVSTGTHRT) the chain is on the extracellular side. Residues 624–633 (LSWNAGIVLK) form a beta stranded membrane-spanning segment. At 634–637 (PTDW) the chain is on the periplasmic side. The beta stranded transmembrane segment at 638-647 (LDLTYRTSTG) threads the bilayer. At 648–675 (FRLPSFAEMYGWRAGVQSKAVKIDPEKS) the chain is on the extracellular side. A beta stranded transmembrane segment spans residues 676–685 (FNKEAGIVFK). The Periplasmic segment spans residues 686–689 (GDFG). Residues 690-699 (NLEASWFNNA) traverse the membrane as a beta stranded segment. Topologically, residues 700-733 (YRDLIVRGYEAQIKDGKEEAKGDPAYLNAQSARI) are extracellular. Residues 734 to 743 (TGINILGKID) traverse the membrane as a beta stranded segment. Topologically, residues 744 to 755 (WNGVWDKLPEGW) are periplasmic. A beta stranded membrane pass occupies residues 756 to 765 (YSTFAYNRVR). At 766–790 (VRDIKKRADRTDIQSHLFDAIQPSR) the chain is on the extracellular side. The beta stranded transmembrane segment at 791–799 (YVVGLGYDQ) threads the bilayer. Over 800-802 (PEG) the chain is Periplasmic. The beta stranded transmembrane segment at 803-811 (KWGVNGMLT) threads the bilayer. Residues 812-845 (YSKAKEITELLGSRALLNGNSRNTKATARRTRPW) are Extracellular-facing. A beta stranded membrane pass occupies residues 846-855 (YIVDVSGYYT). Over 856-860 (VKKHF) the chain is Periplasmic. The chain crosses the membrane as a beta stranded span at residues 861–870 (TLRAGVYNLL). At 871-905 (NYRYVTWENVRQTAGGAVNQHKNVGVYNRYAAPGR) the chain is on the extracellular side. A TonB C-terminal box motif is present at residues 898–915 (NRYAAPGRNYTFSLEMKF). A beta stranded membrane pass occupies residues 906–915 (NYTFSLEMKF).

This sequence belongs to the TonB-dependent receptor family. Binds both human apo- and holo-transferrin (TF), via the TF C-terminus. Forms a large complex with TF and TbpB.

The protein resides in the cell outer membrane. Functionally, neisseria acquires iron by extracting it from serum transferrin (TF) in its human host. Acts as a TF receptor and is required for TF utilization. Binds both apo- and holo-TF, via the TF C-terminus. In Neisseria meningitidis serogroup B (strain ATCC BAA-335 / MC58), this protein is Transferrin-binding protein A.